The primary structure comprises 94 residues: MNPFASLEGQDNISSVFFLHMQQFESQVKDRFRFPIFRLERKTFGNSCYQVETLKVKCRPRHAKSCNLLTLLFKSRTQSVLVPNFGFLILNSEP.

This is an uncharacterized protein from Saccharomyces cerevisiae (strain ATCC 204508 / S288c) (Baker's yeast).